A 270-amino-acid chain; its full sequence is Formamidopyrimidine-DNA glycosylase (270 aa).

The active-site Schiff-base intermediate with DNA is the proline 2. Glutamate 3 functions as the Proton donor in the catalytic mechanism. Lysine 58 (proton donor; for beta-elimination activity) is an active-site residue. Histidine 91, arginine 110, and arginine 151 together coordinate DNA. The FPG-type zinc-finger motif lies at 236 to 270 (FVYGRGGEFCKVCGSTLREIRLGQRASVYCPRCQR). The active-site Proton donor; for delta-elimination activity is the arginine 260.

It belongs to the FPG family. Monomer. Requires Zn(2+) as cofactor.

The enzyme catalyses Hydrolysis of DNA containing ring-opened 7-methylguanine residues, releasing 2,6-diamino-4-hydroxy-5-(N-methyl)formamidopyrimidine.. The catalysed reaction is 2'-deoxyribonucleotide-(2'-deoxyribose 5'-phosphate)-2'-deoxyribonucleotide-DNA = a 3'-end 2'-deoxyribonucleotide-(2,3-dehydro-2,3-deoxyribose 5'-phosphate)-DNA + a 5'-end 5'-phospho-2'-deoxyribonucleoside-DNA + H(+). In terms of biological role, involved in base excision repair of DNA damaged by oxidation or by mutagenic agents. Acts as a DNA glycosylase that recognizes and removes damaged bases. Has a preference for oxidized purines, such as 7,8-dihydro-8-oxoguanine (8-oxoG). Has AP (apurinic/apyrimidinic) lyase activity and introduces nicks in the DNA strand. Cleaves the DNA backbone by beta-delta elimination to generate a single-strand break at the site of the removed base with both 3'- and 5'-phosphates. The polypeptide is Formamidopyrimidine-DNA glycosylase (Pseudomonas paraeruginosa (strain DSM 24068 / PA7) (Pseudomonas aeruginosa (strain PA7))).